Here is a 675-residue protein sequence, read N- to C-terminus: Protein PALS1 (675 aa).

Disordered regions lie at residues 1–34 (MTTS…KHRE) and 51–78 (RRSA…KKQE). Residues 1 to 345 (MTTSHMNGHV…QQIKPPPAKE (345 aa)) form a required for the correct localization of PALS1 and PATJ at cell-cell contacts and the normal formation of tight junctions and adherens junctions region. Basic and acidic residues-rich tracts occupy residues 10–34 (VTEE…KHRE) and 54–78 (AQLE…KKQE). 2 positions are modified to phosphoserine: Ser-14 and Ser-25. The tract at residues 21 to 140 (VDLASPEEHQ…LKHIQHTLID (120 aa)) is interaction with PARD6B. 2 positions are modified to phosphoserine: Ser-83 and Ser-84. L27 domains lie at 120–177 (KILE…NKAS) and 179–235 (PFPL…MQLE). The segment at 181–243 (PLISNAQDLA…LEPITDERVY (63 aa)) is interaction with LIN7C. A PDZ domain is found at 256-336 (IVRIEKARDI…TLTFVLIPSQ (81 aa)). One can recognise an SH3 domain in the interval 345-417 (ETVIHVKAHF…PGKSFQQQRE (73 aa)). Residues 479–660 (KRPIILIGPQ…AYQELLRLIN (182 aa)) form the Guanylate kinase-like domain. 486–493 (GPQNCGQN) lines the ATP pocket.

It belongs to the MAGUK family. As to quaternary structure, heterodimer with MPP1. Forms a heterotrimeric complex composed of PALS1, LIN7B and PATJ; the N-terminal L27 domain of PALS1 interacts with the L27 domain of PATJ and the C-terminal L27 domain of PALS1 interacts with the L27 domain of LIN7B. Component of a complex composed of PALS1, CRB1 and MPP4. Component of a complex whose core is composed of ARHGAP17, AMOT, PALS1, PATJ and PARD3/PAR3. Component of a complex composed of PALS1, CRB1 and EPB41L5. Within the complex, interacts (via HOOK domain) with EPB41L5 (via FERM domain), and interacts with CRB1 (via intracellular domain). Component of a complex composed of PALS1, MPP3 and CRB1; PALS1 acts as a bridging protein between MPP3 (via guanylate kinase-like domain) and CRB1. Component of a complex composed of CRB3, PALS1 and PATJ. As part of the Crumbs complex; interacts with WWP1, the interaction is enhanced by AMOTL2 and facilitates WWP1 localization to the plasma membrane. The Crumbs complex promotes monoubiquitination of AMOTL2 by WWP1, which activates the Hippo signaling pathway. Interacts (via PDZ domain) with PATJ (via N-terminus). Interacts with EZR. Interacts (via PDZ domain) with CRB1 (via C-terminal ERLI motif). While the PDZ domain is sufficient for interaction with CRB1, the adjacent SH3 and guanylate kinase-like domains are likely to contribute to a high affinity interaction. Interacts with WWTR1/TAZ (via WW domain). Interacts with MPP7. Interacts (via PDZ domain) with CRB3 (via C-terminus). Interacts with LIN7C. Interacts with MPDZ. Interacts with PARD6B. Interacts with SC6A1. Interacts with CDH5; the interaction promotes PALS1 localization to cell junctions and is required for CDH5-mediated vascular lumen formation and endothelial cell. Interacts with NPHP1 (via coiled coil and SH3 domains). Interacts with NPHP4. Interacts with CRB2.

The protein resides in the golgi apparatus. It localises to the cell membrane. It is found in the endomembrane system. The protein localises to the cell junction. Its subcellular location is the tight junction. The protein resides in the adherens junction. It localises to the cell projection. It is found in the axon. The protein localises to the perikaryon. Its subcellular location is the apical cell membrane. Plays a role in tight junction biogenesis and in the establishment of cell polarity in epithelial cells. Also involved in adherens junction biogenesis by ensuring correct localization of the exocyst complex protein EXOC4/SEC8 which allows trafficking of adherens junction structural component CDH1 to the cell surface. Plays a role through its interaction with CDH5 in vascular lumen formation and endothelial membrane polarity. Required during embryonic and postnatal retinal development. Required for the maintenance of cerebellar progenitor cells in an undifferentiated proliferative state, preventing premature differentiation, and is required for cerebellar histogenesis, fissure formation, cerebellar layer organization and cortical development. Plays a role in neuronal progenitor cell survival, potentially via promotion of mTOR signaling. Plays a role in the radial and longitudinal extension of the myelin sheath in Schwann cells. May modulate SC6A1/GAT1-mediated GABA uptake by stabilizing the transporter. May play a role in the T-cell receptor-mediated activation of NF-kappa-B. Required for localization of EZR to the apical membrane of parietal cells and may play a role in the dynamic remodeling of the apical cytoskeleton. Required for the normal polarized localization of the vesicular marker STX4. Required for the correct trafficking of the myelin proteins PMP22 and MAG. Involved in promoting phosphorylation and cytoplasmic retention of transcriptional coactivators YAP1 and WWTR1/TAZ which leads to suppression of TGFB1-dependent transcription of target genes such as CCN2/CTGF, SERPINE1/PAI1, SNAI1/SNAIL1 and SMAD7. In Pongo abelii (Sumatran orangutan), this protein is Protein PALS1.